The primary structure comprises 242 residues: Triosephosphate isomerase (242 aa).

Substrate is bound at residue 8 to 10; the sequence is NWK. Residue H98 is the Electrophile of the active site. E167 serves as the catalytic Proton acceptor. Residues G173, S205, and 226-227 each bind substrate; that span reads GG.

It belongs to the triosephosphate isomerase family. Homodimer.

It is found in the cytoplasm. The catalysed reaction is D-glyceraldehyde 3-phosphate = dihydroxyacetone phosphate. It participates in carbohydrate biosynthesis; gluconeogenesis. The protein operates within carbohydrate degradation; glycolysis; D-glyceraldehyde 3-phosphate from glycerone phosphate: step 1/1. Its function is as follows. Involved in the gluconeogenesis. Catalyzes stereospecifically the conversion of dihydroxyacetone phosphate (DHAP) to D-glyceraldehyde-3-phosphate (G3P). This Mesomycoplasma hyopneumoniae (strain 232) (Mycoplasma hyopneumoniae) protein is Triosephosphate isomerase.